The sequence spans 319 residues: Transcriptional regulator LsrR (319 aa).

Residues 32–55 constitute a DNA-binding region (H-T-H motif); it reads QSEISERLGLTRLKVSRLLEKGHQ.

Belongs to the SorC transcriptional regulatory family.

Its subcellular location is the cytoplasm. Its activity is regulated as follows. Inactivated by phosphorylated autoinducer-2 (phospho-AI-2). Phospho-AI-2 acts by binding to LsrR, which is then unable to bind to the promoter regions, allowing the transcription of the target genes. Its function is as follows. Transcriptional regulator that represses the expression of the lsr operon (lsrACDBFGE) in the absence of the quorum-sensing signaling molecule autoinducer 2 (AI-2). It also represses the expression of the lsrRK operon. Acts by binding to the intergenic region between the lsr operon and lsrR. In the presence of phosphorylated autoinducer-2 (phospho-AI-2), LsrR is inactivated, leading to the transcription of the genes. The regulatory function of LsrR was thought to be limited to the lsr operon, but it was subsequently shown to be involved, directly or indirectly, in the regulation of SPI-1 and flagella genes. It negatively regulates the expression of those genes, which reduces the ability of Salmonella to invade host cells. The sequence is that of Transcriptional regulator LsrR from Salmonella typhimurium (strain LT2 / SGSC1412 / ATCC 700720).